The primary structure comprises 62 residues: Protein A37.5 homolog (62 aa).

Belongs to the orthopoxviruses A37.5 protein family.

This is Protein A37.5 homolog (A40_5R) from Homo sapiens (Human).